We begin with the raw amino-acid sequence, 45 residues long: Photosystem II reaction center protein K (45 aa).

The propeptide occupies 1–8 (MDFALLLA). A helical membrane pass occupies residues 24-44 (LPLIPLFFLLLAFVWQAAVGF).

This sequence belongs to the PsbK family. As to quaternary structure, PSII is composed of 1 copy each of membrane proteins PsbA, PsbB, PsbC, PsbD, PsbE, PsbF, PsbH, PsbI, PsbJ, PsbK, PsbL, PsbM, PsbT, PsbX, PsbY, PsbZ, Psb30/Ycf12, peripheral proteins PsbO, CyanoQ (PsbQ), PsbU, PsbV and a large number of cofactors. It forms dimeric complexes.

Its subcellular location is the cellular thylakoid membrane. Its function is as follows. One of the components of the core complex of photosystem II (PSII). PSII is a light-driven water:plastoquinone oxidoreductase that uses light energy to abstract electrons from H(2)O, generating O(2) and a proton gradient subsequently used for ATP formation. It consists of a core antenna complex that captures photons, and an electron transfer chain that converts photonic excitation into a charge separation. In Gloeothece citriformis (strain PCC 7424) (Cyanothece sp. (strain PCC 7424)), this protein is Photosystem II reaction center protein K.